We begin with the raw amino-acid sequence, 65 residues long: UPF0434 protein Mpe_A2486 (65 aa).

This sequence belongs to the UPF0434 family.

The chain is UPF0434 protein Mpe_A2486 from Methylibium petroleiphilum (strain ATCC BAA-1232 / LMG 22953 / PM1).